The sequence spans 480 residues: F-box only protein 3 (480 aa).

The region spanning 10–56 (LLTLESLPTDPLLLILSFVDYRDLINCCYVSRRLSQLSTHDPLWRRH) is the F-box domain. Residues 278–408 (VATTGDITVS…FHMACPTFRV (131 aa)) enclose the ApaG domain. Positions 419 to 458 (EYEEMEEEAEEEEEEENDDSADMDESDESDADENESDEGE) are enriched in acidic residues. The tract at residues 419 to 463 (EYEEMEEEAEEEEEEENDDSADMDESDESDADENESDEGEGEARR) is disordered.

Part of a SCF (SKP1-cullin-F-box) protein ligase complex SCF(FBXO3) consisting of FBXO3, SKP1, CUL1 and RBX1. Interacts with PML, interaction is direct and takes place either alone or within the SCF complex.

It is found in the nucleus. It participates in protein modification; protein ubiquitination. Substrate recognition component of the SCF (SKP1-CUL1-F-box protein)-type E3 ubiquitin ligase complex, SCF(FBXO3), which mediates the ubiquitination and subsequent proteasomal degradation of target proteins. Mediates the ubiquitination of HIPK2 and probably that of EP300, leading to rapid degradation by the proteasome. In the presence of PML, HIPK2 ubiquitination still occurs, but degradation is prevented. PML, HIPK2 and FBXO3 may act synergically to activate p53/TP53-dependent transactivation. The SCF(FBXO3) also acts as a regulator of inflammation by mediating ubiquitination and degradation of FBXL2: specifically recognizes FBXL2 phosphorylated at 'Thr-404' and promotes its ubiquitination. The protein is F-box only protein 3 (Fbxo3) of Mus musculus (Mouse).